The primary structure comprises 601 residues: Elongation factor 4 (601 aa).

Residues 7-189 enclose the tr-type G domain; the sequence is DTIRNFSIVA…AIVAKLPPPK (183 aa). GTP contacts are provided by residues 19 to 24 and 136 to 139; these read DHGKST and NKID.

Belongs to the TRAFAC class translation factor GTPase superfamily. Classic translation factor GTPase family. LepA subfamily.

The protein localises to the cell inner membrane. The catalysed reaction is GTP + H2O = GDP + phosphate + H(+). In terms of biological role, required for accurate and efficient protein synthesis under certain stress conditions. May act as a fidelity factor of the translation reaction, by catalyzing a one-codon backward translocation of tRNAs on improperly translocated ribosomes. Back-translocation proceeds from a post-translocation (POST) complex to a pre-translocation (PRE) complex, thus giving elongation factor G a second chance to translocate the tRNAs correctly. Binds to ribosomes in a GTP-dependent manner. The sequence is that of Elongation factor 4 from Methylobacterium sp. (strain 4-46).